Consider the following 185-residue polypeptide: Photosystem I assembly protein Ycf4 (185 aa).

2 consecutive transmembrane segments (helical) span residues 20–40 (GNFFWACILFLGSLGFLSVGA) and 57–77 (ILFFPQGVVMSFYGIAGLFIS).

It belongs to the Ycf4 family.

It is found in the plastid. The protein resides in the chloroplast thylakoid membrane. Seems to be required for the assembly of the photosystem I complex. The chain is Photosystem I assembly protein Ycf4 from Agrostis stolonifera (Creeping bentgrass).